Reading from the N-terminus, the 237-residue chain is NAD(P)H-quinone oxidoreductase subunit K, chloroplastic (237 aa).

[4Fe-4S] cluster-binding residues include Cys-55, Cys-56, Cys-120, and Cys-151.

Belongs to the complex I 20 kDa subunit family. In terms of assembly, NDH is composed of at least 16 different subunits, 5 of which are encoded in the nucleus. It depends on [4Fe-4S] cluster as a cofactor.

It localises to the plastid. It is found in the chloroplast thylakoid membrane. The enzyme catalyses a plastoquinone + NADH + (n+1) H(+)(in) = a plastoquinol + NAD(+) + n H(+)(out). It catalyses the reaction a plastoquinone + NADPH + (n+1) H(+)(in) = a plastoquinol + NADP(+) + n H(+)(out). Its function is as follows. NDH shuttles electrons from NAD(P)H:plastoquinone, via FMN and iron-sulfur (Fe-S) centers, to quinones in the photosynthetic chain and possibly in a chloroplast respiratory chain. The immediate electron acceptor for the enzyme in this species is believed to be plastoquinone. Couples the redox reaction to proton translocation, and thus conserves the redox energy in a proton gradient. The protein is NAD(P)H-quinone oxidoreductase subunit K, chloroplastic of Nephroselmis olivacea (Green alga).